Reading from the N-terminus, the 199-residue chain is WASH complex subunit 3 (199 aa).

Residues 47 to 76 are a coiled coil; the sequence is VCEEKLSALSLRIQQIETTLNILEAKLSSI. The span at 93–120 shows a compositional bias: polar residues; the sequence is NISNGHLPSQPDAQSVVVSPQSDNNSMN. Disordered stretches follow at residues 93-136 and 170-199; these read NISN…NITT and PDLL…SFSD. Positions 183–192 are enriched in acidic residues; sequence GEPEAEESSD.

It belongs to the CCDC53 family. Component of the WASH complex.

The polypeptide is WASH complex subunit 3 (Xenopus laevis (African clawed frog)).